A 1043-amino-acid polypeptide reads, in one-letter code: Polycomb protein Pcl (1043 aa).

4 disordered regions span residues 1-34, 271-302, 317-346, and 395-422; these read MMNN…SAPP, PDST…PLLA, FKTV…AAPS, and KLRK…NTSP. Positions 25–34 are enriched in low complexity; the sequence is PSTAVPSAPP. The segment covering 324-344 has biased composition (pro residues); the sequence is PPTPPTPPSPPPPPPAPPVAA. The Tudor domain maps to 349–404; the sequence is VTYALQEDVFIKCNDGRFYLGTIIDQTSDQYLIRFDDQSEQWCEPDKLRKLGGGSS. Residues 399 to 412 are compositionally biased toward gly residues; that stretch reads LGGGSSITAGGGGA. 2 consecutive PHD-type zinc fingers follow at residues 424 to 472 and 512 to 560; these read GPMC…CAKP and QIYC…VFCC. The span at 737 to 757 shows a compositional bias: basic and acidic residues; it reads AKKQAAQKADKHDELPLKPDL. Disordered regions lie at residues 737–819 and 931–985; these read AKKQ…TSSL and AKDL…PGHS. Positions 783-792 are enriched in basic residues; the sequence is SRKRKAFRLS. Residues 793 to 804 are compositionally biased toward basic and acidic residues; the sequence is KRYDNSRNHCDL. Residues S805 and S806 each carry the phosphoserine modification. Residues 807-819 show a composition bias toward low complexity; the sequence is DENSSSSRGTSSL. Positions 945 to 954 are enriched in basic residues; the sequence is THGRLLRQRP. The span at 955–977 shows a compositional bias: low complexity; the sequence is QKQSPSQSRRNSTSSTATSSSSN.

Belongs to the Polycomblike family. In terms of assembly, component of a form of the Esc/E(z) complex present specifically during early embryogenesis which is composed of Caf1-55, esc, E(z), Su(z)12, Pcl and HDAC1/Rpd3. This complex is distinct from the PRC1 complex, which contains many other PcG proteins like Pc, Ph, Psc, Su(z)2. The two complexes however cooperate and interact together during the first 3 hours of development to establish PcG silencing. Interacts with corto in vitro.

Its subcellular location is the nucleus. The protein resides in the chromosome. In terms of biological role, polycomb group (PcG) protein. While PcG proteins are generally required to maintain the transcriptionally repressive state of homeotic genes throughout development, this protein is specifically required during the first 6 hours of embryogenesis to establish the repressed state. Component of the Esc/E(z) complex, which methylates 'Lys-9' and 'Lys-27' residues of histone H3, leading to transcriptional repression of the affected target gene. The Esc/E(z) complex is necessary but not sufficient for the repression of homeotic target genes, suggesting that the recruitment of the distinct PRC1 complex is also required. Required for the correct spatial expression of the homeotic genes of the Antennapedia and Bithorax complexes. The sequence is that of Polycomb protein Pcl (Pcl) from Drosophila melanogaster (Fruit fly).